Here is a 960-residue protein sequence, read N- to C-terminus: Probable glutamyl endopeptidase, chloroplastic (960 aa).

A chloroplast-targeting transit peptide spans 1–62 (MMRFHKACHR…FSENPLTTVM (62 aa)). The interval 78 to 98 (SGGAEDGGGTSNGSLSASATA) is disordered. Polar residues predominate over residues 89 to 98 (NGSLSASATA). Active-site charge relay system residues include S780, D854, and H888. The segment at 915–960 (TSDADTSPDQSKEGSDSADKVSTGTGGGNPEFGEHEVHSKLRRSLL) is disordered. Basic and acidic residues predominate over residues 924–933 (QSKEGSDSAD).

The protein belongs to the peptidase S9D family.

It localises to the plastid. It is found in the chloroplast stroma. Serine-type protease active in vitro against the LHCII N-terminal. Cleaves its substrate on the carboxy-side of Glu residues. This chain is Probable glutamyl endopeptidase, chloroplastic (GEP), found in Arabidopsis thaliana (Mouse-ear cress).